Here is a 78-residue protein sequence, read N- to C-terminus: Large ribosomal subunit protein bL31 (78 aa).

This sequence belongs to the bacterial ribosomal protein bL31 family. Type A subfamily. In terms of assembly, part of the 50S ribosomal subunit.

Functionally, binds the 23S rRNA. The chain is Large ribosomal subunit protein bL31 (rpmE) from Rickettsia felis (strain ATCC VR-1525 / URRWXCal2) (Rickettsia azadi).